The chain runs to 474 residues: Cysteine--tRNA ligase (474 aa).

Zn(2+) is bound at residue C27. The short motif at 29–39 (PTVYNYIHIGN) is the 'HIGH' region element. Residues C212, H237, and E241 each contribute to the Zn(2+) site. Residues 271-275 (KMSKS) carry the 'KMSKS' region motif. An ATP-binding site is contributed by K274.

This sequence belongs to the class-I aminoacyl-tRNA synthetase family. In terms of assembly, monomer. The cofactor is Zn(2+).

The protein resides in the cytoplasm. The enzyme catalyses tRNA(Cys) + L-cysteine + ATP = L-cysteinyl-tRNA(Cys) + AMP + diphosphate. The chain is Cysteine--tRNA ligase from Lactobacillus delbrueckii subsp. bulgaricus (strain ATCC 11842 / DSM 20081 / BCRC 10696 / JCM 1002 / NBRC 13953 / NCIMB 11778 / NCTC 12712 / WDCM 00102 / Lb 14).